Reading from the N-terminus, the 304-residue chain is Ribosomal RNA small subunit methyltransferase H (304 aa).

S-adenosyl-L-methionine is bound by residues 37–39 (GGH), Asp57, Phe79, Asp100, and His107.

Belongs to the methyltransferase superfamily. RsmH family.

It localises to the cytoplasm. The catalysed reaction is cytidine(1402) in 16S rRNA + S-adenosyl-L-methionine = N(4)-methylcytidine(1402) in 16S rRNA + S-adenosyl-L-homocysteine + H(+). Functionally, specifically methylates the N4 position of cytidine in position 1402 (C1402) of 16S rRNA. The protein is Ribosomal RNA small subunit methyltransferase H of Bacteroides fragilis (strain ATCC 25285 / DSM 2151 / CCUG 4856 / JCM 11019 / LMG 10263 / NCTC 9343 / Onslow / VPI 2553 / EN-2).